The sequence spans 114 residues: Iron-sulfur cluster assembly protein CyaY (114 aa).

It belongs to the frataxin family.

Its function is as follows. Involved in iron-sulfur (Fe-S) cluster assembly. May act as a regulator of Fe-S biogenesis. This Ralstonia pickettii (strain 12J) protein is Iron-sulfur cluster assembly protein CyaY.